We begin with the raw amino-acid sequence, 108 residues long: UPF0060 membrane protein YnfA (108 aa).

The Periplasmic segment spans residues 1–5 (MLKTT). A helical transmembrane segment spans residues 6 to 26 (LLFFVTALCEIIGCFLPWLWL). Topologically, residues 27 to 30 (KRGA) are cytoplasmic. A helical transmembrane segment spans residues 31-51 (SVWWLLPAAASLALFVWLLTL). Residues 52 to 60 (HPAASGRVY) are Periplasmic-facing. Residues 61–81 (AAYGGVYVCTALLWLRVVDGV) form a helical membrane-spanning segment. Residues 82 to 84 (RLT) lie on the Cytoplasmic side of the membrane. The helical transmembrane segment at 85-105 (VYDWCGALIALCGMLIIVVGW) threads the bilayer. Over 106–108 (GRT) the chain is Periplasmic.

It belongs to the UPF0060 family.

The protein resides in the cell inner membrane. The polypeptide is UPF0060 membrane protein YnfA (Salmonella agona (strain SL483)).